The primary structure comprises 953 residues: Isoleucine--tRNA ligase (953 aa).

Positions 57 to 67 match the 'HIGH' region motif; that stretch reads PYANGDIHIGH. Position 582 (glutamate 582) interacts with L-isoleucyl-5'-AMP. Residues 623–627 carry the 'KMSKS' region motif; sequence KMSKS. ATP is bound at residue lysine 626. Residues cysteine 916, cysteine 919, cysteine 936, and cysteine 939 each coordinate Zn(2+).

Belongs to the class-I aminoacyl-tRNA synthetase family. IleS type 1 subfamily. Monomer. It depends on Zn(2+) as a cofactor.

It is found in the cytoplasm. It carries out the reaction tRNA(Ile) + L-isoleucine + ATP = L-isoleucyl-tRNA(Ile) + AMP + diphosphate. Functionally, catalyzes the attachment of isoleucine to tRNA(Ile). As IleRS can inadvertently accommodate and process structurally similar amino acids such as valine, to avoid such errors it has two additional distinct tRNA(Ile)-dependent editing activities. One activity is designated as 'pretransfer' editing and involves the hydrolysis of activated Val-AMP. The other activity is designated 'posttransfer' editing and involves deacylation of mischarged Val-tRNA(Ile). This is Isoleucine--tRNA ligase from Bordetella petrii (strain ATCC BAA-461 / DSM 12804 / CCUG 43448).